Consider the following 335-residue polypeptide: MVREGEERIGNRVSLGVIGVSYRETTLQQREQVLHILQQAQGSFRPEVFQEERDYVLLATCHRVELYSVAPAELFDSLAQEIELLGVSPYFYRNQDCFAHLFCVAGGLDSLVLGETEIQGQVKRAYLQAAREQKLSFALHFLFQKALKEGKVFRAKGGAPYAEITIPILVDQELRRRQIDKKASLLFIGYSEINRSVAYHLQRQGFSCITFCSRQQLPTLSMRQVVREELCFQDPYRVVFLGSSELQYALPHSLWESIWDIPDRIVFDFAVPRALPSHTVFPHRYVDMDQISDWLREHRKEVNSAHLHSLREVAYRYWNSLNQRLERRDCVGANA.

Substrate is bound by residues 60-63 (TCHR), Ser-110, 115-117 (ETE), and Gln-121. Cys-61 functions as the Nucleophile in the catalytic mechanism. Residue 189–194 (GYSEIN) participates in NADP(+) binding.

It belongs to the glutamyl-tRNA reductase family. In terms of assembly, homodimer.

The enzyme catalyses (S)-4-amino-5-oxopentanoate + tRNA(Glu) + NADP(+) = L-glutamyl-tRNA(Glu) + NADPH + H(+). Its pathway is porphyrin-containing compound metabolism; protoporphyrin-IX biosynthesis; 5-aminolevulinate from L-glutamyl-tRNA(Glu): step 1/2. Its function is as follows. Catalyzes the NADPH-dependent reduction of glutamyl-tRNA(Glu) to glutamate 1-semialdehyde (GSA). The chain is Glutamyl-tRNA reductase from Chlamydia trachomatis serovar D (strain ATCC VR-885 / DSM 19411 / UW-3/Cx).